A 338-amino-acid polypeptide reads, in one-letter code: Glycerol-3-phosphate dehydrogenase [NAD(P)+] (338 aa).

3 residues coordinate NADPH: Ser13, Trp14, and Lys108. The sn-glycerol 3-phosphate site is built by Lys108, Gly139, and Ser141. Residue Ala143 participates in NADPH binding. Sn-glycerol 3-phosphate-binding residues include Lys194, Asp247, Ser257, Arg258, and Asn259. Lys194 acts as the Proton acceptor in catalysis. Arg258 is a binding site for NADPH. NADPH is bound by residues Val282 and Glu284.

Belongs to the NAD-dependent glycerol-3-phosphate dehydrogenase family.

It is found in the cytoplasm. It carries out the reaction sn-glycerol 3-phosphate + NAD(+) = dihydroxyacetone phosphate + NADH + H(+). The enzyme catalyses sn-glycerol 3-phosphate + NADP(+) = dihydroxyacetone phosphate + NADPH + H(+). It participates in membrane lipid metabolism; glycerophospholipid metabolism. Its function is as follows. Catalyzes the reduction of the glycolytic intermediate dihydroxyacetone phosphate (DHAP) to sn-glycerol 3-phosphate (G3P), the key precursor for phospholipid synthesis. This Streptococcus pneumoniae (strain Hungary19A-6) protein is Glycerol-3-phosphate dehydrogenase [NAD(P)+].